Here is a 498-residue protein sequence, read N- to C-terminus: MMMSRKNVTYRQREKLIAEAQRQEFLREDRIKHLNYEQQMAESLKSEERVEKKRFLQRLQNEEHEKRMDEAIQLGEESRRLKERQLEQEERMALEMARIKHEKLKDEKIRQQIRENSTELRELEQKLKAAYLNRERAAQIAEKEVLKYEQMKEDLETVRKMQKDQERAEDEEIVRETKRYQEKLNYQIELERQLEEKEKTRQEAYHEFLKEKILIDEIVRKIYEEDQMETQLKLEKMNATRRYIEEFKEQQQTWRNMEQTRMEEENRKILAFANMQQRREEDRMAEVREREQQKKALQEKLAEQIQKEQQQREELEQMREELYLEEQAEEARQKAISEMEKKIRQRLEMQQTFEEQMAFKQIVQQAAKEEEEAFVQAMLAKFAEDDRIEQMNAQKRRMKQLEHKRAVEKLLEERRQQFIADKERELQERQEEERRESFRRAIIEEERQKILKQHATQLLGYLPKGIFKGEDDLNLFDEGFRQDFQKRRADISSNDGWD.

3 coiled-coil regions span residues 45–211 (KSEE…FLKE), 270–348 (LAFA…QRLE), and 385–450 (DDRI…RQKI).

It belongs to the MNS1 family.

Its subcellular location is the nucleus. The protein resides in the cytoplasm. The protein localises to the cytoskeleton. It localises to the cilium axoneme. It is found in the flagellum axoneme. Its function is as follows. Microtubule inner protein (MIP) part of the dynein-decorated doublet microtubules (DMTs) in cilia axoneme, which is required for motile cilia beating. May play a role in the control of meiotic division and germ cell differentiation through regulation of pairing and recombination during meiosis. Required for sperm flagella assembly. May play a role in the assembly and function of the outer dynein arm-docking complex (ODA-DC). ODA-DC mediates outer dynein arms (ODA) binding onto the axonemal doublet microtubules. The sequence is that of Meiosis-specific nuclear structural protein 1 (mns1) from Xenopus tropicalis (Western clawed frog).